The primary structure comprises 284 residues: Pantothenate synthetase (284 aa).

30–37 (MGNLHDGH) is a binding site for ATP. Histidine 37 serves as the catalytic Proton donor. Residue glutamine 61 participates in (R)-pantoate binding. Residue glutamine 61 participates in beta-alanine binding. 149 to 152 (GEKD) provides a ligand contact to ATP. Position 155 (glutamine 155) interacts with (R)-pantoate. Residues isoleucine 178 and 186–189 (LSSR) contribute to the ATP site.

This sequence belongs to the pantothenate synthetase family. In terms of assembly, homodimer.

It localises to the cytoplasm. It catalyses the reaction (R)-pantoate + beta-alanine + ATP = (R)-pantothenate + AMP + diphosphate + H(+). It functions in the pathway cofactor biosynthesis; (R)-pantothenate biosynthesis; (R)-pantothenate from (R)-pantoate and beta-alanine: step 1/1. In terms of biological role, catalyzes the condensation of pantoate with beta-alanine in an ATP-dependent reaction via a pantoyl-adenylate intermediate. In Salmonella heidelberg (strain SL476), this protein is Pantothenate synthetase.